We begin with the raw amino-acid sequence, 101 residues long: PAT complex subunit Asterix (101 aa).

The interval 1 to 26 (MADPRRPARVTRYKPPTTESNPALED) is disordered. The Cytoplasmic segment spans residues 1–27 (MADPRRPARVTRYKPPTTESNPALEDP). The chain crosses the membrane as a helical span at residues 28–46 (TPDYMNLLGMVFSMCGLML). Residue Lys-47 is a topological domain, lumenal. The helical transmembrane segment at 48-65 (LKWCAWIAVYCSFISFAN) threads the bilayer. Topologically, residues 66 to 69 (SRSS) are cytoplasmic. The chain crosses the membrane as a helical span at residues 70–90 (EDTKQMMSSFMLSISAVVMSY). At 91–101 (LQNPQPMSPPW) the chain is on the lumenal side.

Belongs to the Asterix family. As to quaternary structure, component of the multi-pass translocon (MPT) complex.

Its subcellular location is the endoplasmic reticulum membrane. Its function is as follows. Component of the multi-pass translocon (MPT) complex that mediates insertion of multi-pass membrane proteins into the lipid bilayer of membranes. The MPT complex takes over after the SEC61 complex: following membrane insertion of the first few transmembrane segments of proteins by the SEC61 complex, the MPT complex occludes the lateral gate of the SEC61 complex to promote insertion of subsequent transmembrane regions. This Gallus gallus (Chicken) protein is PAT complex subunit Asterix (WDR83OS).